The sequence spans 570 residues: Urease subunit alpha (570 aa).

Residues 132-570 (GGIDTHVHFI…LPMAQRYFLF (439 aa)) form the Urease domain. Ni(2+)-binding residues include His-137 and His-139. Residues His-139 and Ala-170 each coordinate substrate. Residue Lys-220 participates in Ni(2+) binding. Lys-220 carries the N6-carboxylysine modification. Residues His-222 and His-249 each contribute to the substrate site. The Ni(2+) site is built by His-249 and His-275. His-323 acts as the Proton donor in catalysis. A Ni(2+)-binding site is contributed by Asp-363. Residue Ala-366 participates in substrate binding.

This sequence belongs to the metallo-dependent hydrolases superfamily. Urease alpha subunit family. In terms of assembly, heterotrimer of UreA (gamma), UreB (beta) and UreC (alpha) subunits. Three heterotrimers associate to form the active enzyme. Requires Ni cation as cofactor. Carboxylation allows a single lysine to coordinate two nickel ions.

It localises to the cytoplasm. The catalysed reaction is urea + 2 H2O + H(+) = hydrogencarbonate + 2 NH4(+). It participates in nitrogen metabolism; urea degradation; CO(2) and NH(3) from urea (urease route): step 1/1. With respect to regulation, inhibited by fluoride. This is Urease subunit alpha from Sporosarcina pasteurii (Bacillus pasteurii).